The primary structure comprises 504 residues: ATP synthase subunit alpha, chloroplastic (504 aa).

170-177 (GDRQTGKT) contacts ATP.

It belongs to the ATPase alpha/beta chains family. As to quaternary structure, F-type ATPases have 2 components, CF(1) - the catalytic core - and CF(0) - the membrane proton channel. CF(1) has five subunits: alpha(3), beta(3), gamma(1), delta(1), epsilon(1). CF(0) has four main subunits: a, b, b' and c.

It is found in the plastid. It localises to the chloroplast thylakoid membrane. The catalysed reaction is ATP + H2O + 4 H(+)(in) = ADP + phosphate + 5 H(+)(out). Produces ATP from ADP in the presence of a proton gradient across the membrane. The alpha chain is a regulatory subunit. This is ATP synthase subunit alpha, chloroplastic from Ostreococcus tauri.